Here is a 564-residue protein sequence, read N- to C-terminus: Pyruvate decarboxylase (564 aa).

2 residues coordinate pyruvate: Asp-28 and His-115. Thiamine diphosphate-binding positions include Thr-390 and 413–415; that span reads GSI. Asp-444 lines the Mg(2+) pocket. Residues 445–446 and 471–476 contribute to the thiamine diphosphate site; these read GS and NNGYTI. Residues Asn-471 and Gly-473 each contribute to the Mg(2+) site. Position 477 (Glu-477) interacts with pyruvate.

Belongs to the TPP enzyme family. Homotetramer. It depends on Mg(2+) as a cofactor. Thiamine diphosphate is required as a cofactor.

It carries out the reaction a 2-oxocarboxylate + H(+) = an aldehyde + CO2. The enzyme catalyses pyruvate + H(+) = acetaldehyde + CO2. This Hanseniaspora uvarum (Yeast) protein is Pyruvate decarboxylase (PDC).